We begin with the raw amino-acid sequence, 137 residues long: Large ribosomal subunit protein uL16 (137 aa).

The protein belongs to the universal ribosomal protein uL16 family. As to quaternary structure, part of the 50S ribosomal subunit.

Binds 23S rRNA and is also seen to make contacts with the A and possibly P site tRNAs. The sequence is that of Large ribosomal subunit protein uL16 from Acinetobacter baumannii (strain SDF).